A 629-amino-acid chain; its full sequence is tRNA uridine 5-carboxymethylaminomethyl modification enzyme MnmG (629 aa).

13 to 18 (GGGHAG) is an FAD binding site. NAD(+) is bound at residue 273–287 (GPRYCPSIEDKITRF).

It belongs to the MnmG family. As to quaternary structure, homodimer. Heterotetramer of two MnmE and two MnmG subunits. FAD is required as a cofactor.

It is found in the cytoplasm. In terms of biological role, NAD-binding protein involved in the addition of a carboxymethylaminomethyl (cmnm) group at the wobble position (U34) of certain tRNAs, forming tRNA-cmnm(5)s(2)U34. In Aeromonas salmonicida (strain A449), this protein is tRNA uridine 5-carboxymethylaminomethyl modification enzyme MnmG.